Reading from the N-terminus, the 578-residue chain is Isocitrate dehydrogenase kinase/phosphatase (578 aa).

ATP-binding positions include 315-321 (APGIRGM) and Lys-336. Asp-371 is an active-site residue.

It belongs to the AceK family.

It is found in the cytoplasm. It catalyses the reaction L-seryl-[isocitrate dehydrogenase] + ATP = O-phospho-L-seryl-[isocitrate dehydrogenase] + ADP + H(+). In terms of biological role, bifunctional enzyme which can phosphorylate or dephosphorylate isocitrate dehydrogenase (IDH) on a specific serine residue. This is a regulatory mechanism which enables bacteria to bypass the Krebs cycle via the glyoxylate shunt in response to the source of carbon. When bacteria are grown on glucose, IDH is fully active and unphosphorylated, but when grown on acetate or ethanol, the activity of IDH declines drastically concomitant with its phosphorylation. In Shigella dysenteriae serotype 1 (strain Sd197), this protein is Isocitrate dehydrogenase kinase/phosphatase.